Reading from the N-terminus, the 293-residue chain is Outer membrane protein assembly factor BamD (293 aa).

The signal sequence occupies residues 1-26; the sequence is MIQRPTFFSPIHLLAVLLATFILITG. Cys27 is lipidated: N-palmitoyl cysteine. The S-diacylglycerol cysteine moiety is linked to residue Cys27.

This sequence belongs to the BamD family. As to quaternary structure, part of the Bam complex.

It localises to the cell outer membrane. Functionally, part of the outer membrane protein assembly complex, which is involved in assembly and insertion of beta-barrel proteins into the outer membrane. This chain is Outer membrane protein assembly factor BamD, found in Xylella fastidiosa (strain Temecula1 / ATCC 700964).